Here is a 118-residue protein sequence, read N- to C-terminus: Beta-2-microglobulin (118 aa).

A signal peptide spans 1–20 (MARVVALVLLGLLSLTGLEA). An Ig-like C1-type domain is found at 25–111 (PKVQVYSRHP…QHSTLKEPLI (87 aa)). A disulfide bridge connects residues C45 and C99.

Belongs to the beta-2-microglobulin family. Heterodimer of an alpha chain and a beta chain. Beta-2-microglobulin is the beta-chain of major histocompatibility complex class I molecules.

The protein localises to the secreted. Its function is as follows. Component of the class I major histocompatibility complex (MHC). Involved in the presentation of peptide antigens to the immune system. The protein is Beta-2-microglobulin (B2M) of Equus asinus (Donkey).